We begin with the raw amino-acid sequence, 817 residues long: Two pore calcium channel protein 1 (817 aa).

Residues 1–101 are Cytoplasmic-facing; it reads MSVILDDDVL…PKDARALAAY (101 aa). Residues 22 to 66 are disordered; the sequence is PLTPSNGLGQEDLPSKNGGGQSGPNSQVPSLVSGADSPPSSPPGH. Residues 102–122 form a helical membrane-spanning segment; that stretch reads LFVHNHFFYMMELLTALLLLL. Residues 123–137 are Extracellular-facing; it reads LSLCESPAVPALKLR. A helical transmembrane segment spans residues 138–158; it reads TYVHATLELFALMVVVFELCM. The Cytoplasmic portion of the chain corresponds to 159–172; sequence KLRWLGFHTFVRHK. A helical transmembrane segment spans residues 173–193; the sequence is RTMVKTSVLVVQFIEAIVVLV. Residues 194 to 202 lie on the Extracellular side of the membrane; the sequence is RQTSHVRVT. Residues 203-221 form a helical membrane-spanning segment; sequence RALRCIFLVDCRYCGGVRR. At 222-235 the chain is on the cytoplasmic side; the sequence is NLRQIFQSLPPFMD. Residues 236 to 256 traverse the membrane as a helical segment; it reads ILLLLLFFMIIFAILGFYLFS. Over 257-263 the chain is Extracellular; sequence TNPSDPY. Positions 264–287 form an intramembrane region, helical; Pore-forming; it reads FNTLENSIVNLFVLLTTANFPDVM. At 288 to 298 the chain is on the extracellular side; that stretch reads MPSYSRNPWSC. Residues 299–319 form a helical membrane-spanning segment; it reads VFFIVYLSIELYFIMNLLLAV. At 320–445 the chain is on the cytoplasmic side; the sequence is VFDTFNDIEK…NILVNSKAFQ (126 aa). A helical transmembrane segment spans residues 446–466; it reads YFMYLVVAVNGVWILVETFML. Residues 467–480 lie on the Extracellular side of the membrane; that stretch reads KGGNFISKHVPWSY. Residues 481 to 501 traverse the membrane as a helical segment; the sequence is LVFLTIYGVELFMKVAGLGPV. Residues 502 to 504 are Cytoplasmic-facing; the sequence is EYL. A helical transmembrane segment spans residues 505–527; that stretch reads SSGWNLFDFSVTAFAFLGLLALT. At 528-535 the chain is on the extracellular side; the sequence is LNMEPFYF. Residues 536-550 traverse the membrane as a helical segment; it reads IVVLRPLQLLRLFKL. The Cytoplasmic segment spans residues 551 to 574; sequence KKRYRNVLDTMFELLPRMASLGLT. Residues 575-595 traverse the membrane as a helical segment; it reads LLTFYYSFAIVGMEFFSGRLS. Topologically, residues 596-630 are extracellular; sequence PNCCNSSTVADAYRFINHTVGNKTKVEEGYYYLNN. The segment at residues 631 to 654 is an intramembrane region (helical; Pore-forming); that stretch reads FDNILNSFVTLFELTVVNNWYIIM. Residues 655–671 lie on the Extracellular side of the membrane; that stretch reads EGVTSQTSHWSRLYFMT. The chain crosses the membrane as a helical span at residues 672 to 692; sequence FYIVTMVVMTIIVAFILEAFV. At 693–817 the chain is on the cytoplasmic side; that stretch reads FRMNYSRKSQ…GSRQRSQTVT (125 aa). Residues 770–794 are a coiled coil; sequence SLKMYQEEIQEWYEEHAREQEQQQL. The interval 785–817 is disordered; sequence HAREQEQQQLRGSAPSPAAQQTPGSRQRSQTVT. The span at 802 to 817 shows a compositional bias: polar residues; sequence AAQQTPGSRQRSQTVT.

The protein belongs to the calcium channel alpha-1 subunit (TC 1.A.1.11) family. Two pore calcium channel subfamily. As to quaternary structure, dimer. Interacts with MTOR; the interaction is required for TPCN1 ATP sensitivity. Interacts with STX7, STX8 and STX12. Interacts with JPT2. Found in a complex with LSM12, TPCN1 and TPCN2. Post-translationally, N-glycosylated. In terms of tissue distribution, widely expressed. Expressed at relatively high level in kidney, liver and lung, and in the kidney it is expressed at inner medullary collecting ducts.

The protein resides in the lysosome membrane. It is found in the endosome membrane. It localises to the early endosome membrane. The protein localises to the recycling endosome membrane. It catalyses the reaction Na(+)(in) = Na(+)(out). The enzyme catalyses Ca(2+)(in) = Ca(2+)(out). Its activity is regulated as follows. Na(+) current is inhibited by ATP in a MTORC-dependent manner. ATP sensitivity is independent of PI(3,5)P2. Probably regulated by Mg(2+) ions, cytosolic Mg(2+) selectively inhibits outward current while lysosomal Mg(2+) modestly inhibits both the outward and inward currents. In the absence of Mg(2+), NAADP readily activates TPCN2, with properties similar to PI(3,5)P2. Both current elicited by PI(3,5)P2 as well as NAADP are inhibited by tetrandrine. Functionally, intracellular channel initially characterized as a non-selective Ca(2+)-permeable channel activated by NAADP (nicotinic acid adenine dinucleotide phosphate), it is also a voltage-gated highly-selective Na(+) channel activated directly by PI(3,5)P2 (phosphatidylinositol 3,5-bisphosphate) that senses pH changes and confers electrical excitability to organelles. Localizes to the early and recycling endosomes membranes where it plays a role in the uptake and processing of proteins and regulates organellar membrane excitability, membrane trafficking and pH homeostasis. Ion selectivity is not fixed but rather agonist-dependent and under defined ionic conditions, can be readily activated by both NAADP and PI(3,5)P2. Required for mTOR-dependent nutrient sensing. This chain is Two pore calcium channel protein 1 (Tpcn1), found in Rattus norvegicus (Rat).